The sequence spans 26 residues: uncharacterized protein (26 aa).

This is an uncharacterized protein from Escherichia coli (strain K12).